A 435-amino-acid chain; its full sequence is GTPase Der (435 aa).

EngA-type G domains lie at 4 to 167 (GIVA…PSHE) and 175 to 350 (TRVS…TALD). GTP contacts are provided by residues 10–17 (GRPNVGKS), 57–61 (DTGGI), 119–122 (NKYD), 181–188 (GRPNVGKS), 228–232 (DTAGI), and 293–296 (NKWD). One can recognise a KH-like domain in the interval 351 to 435 (KKIKTSVFNE…PMSIIFRERK (85 aa)).

It belongs to the TRAFAC class TrmE-Era-EngA-EngB-Septin-like GTPase superfamily. EngA (Der) GTPase family. As to quaternary structure, associates with the 50S ribosomal subunit.

In terms of biological role, GTPase that plays an essential role in the late steps of ribosome biogenesis. This chain is GTPase Der, found in Mesoplasma florum (strain ATCC 33453 / NBRC 100688 / NCTC 11704 / L1) (Acholeplasma florum).